We begin with the raw amino-acid sequence, 358 residues long: Chorismate synthase (358 aa).

NADP(+) is bound by residues Arg48 and Arg54. FMN is bound by residues 125 to 127, Gly282, 297 to 301, and Arg323; these read RSS and KPPAS.

The protein belongs to the chorismate synthase family. In terms of assembly, homotetramer. FMNH2 serves as cofactor.

The catalysed reaction is 5-O-(1-carboxyvinyl)-3-phosphoshikimate = chorismate + phosphate. Its pathway is metabolic intermediate biosynthesis; chorismate biosynthesis; chorismate from D-erythrose 4-phosphate and phosphoenolpyruvate: step 7/7. Its function is as follows. Catalyzes the anti-1,4-elimination of the C-3 phosphate and the C-6 proR hydrogen from 5-enolpyruvylshikimate-3-phosphate (EPSP) to yield chorismate, which is the branch point compound that serves as the starting substrate for the three terminal pathways of aromatic amino acid biosynthesis. This reaction introduces a second double bond into the aromatic ring system. This is Chorismate synthase from Roseiflexus castenholzii (strain DSM 13941 / HLO8).